A 223-amino-acid chain; its full sequence is Killer cell lectin-like receptor subfamily B member 1B allele A (223 aa).

Topologically, residues 1 to 43 are cytoplasmic; that stretch reads MDSTTLVYADLNLARIQEPKHDSPPSLSPDTCRCPRWHRLALK. The short motif at 6–11 is the ITIM motif element; that stretch reads LVYADL. Residues 32-35 carry the LCK-binding motif motif; that stretch reads CRCP. Residues 44–63 form a helical; Signal-anchor for type II membrane protein membrane-spanning segment; it reads FGCAGLILLVLVVIGLCVLV. Topologically, residues 64-223 are extracellular; that stretch reads LSVQKSSVQK…LNHETPSNDS (160 aa). The 120-residue stretch at 93 to 212 folds into the C-type lectin domain; that stretch reads ECPQDWLSHR…STDNRWICQK (120 aa). Disulfide bonds link C122/C210 and C189/C202.

In terms of assembly, homodimer; disulfide-linked. Interacts with tyrosine kinase LCK. Binds PTPN6/SHP-1 in a phosphorylation-dependent manner. In terms of tissue distribution, expressed in NK cells and a subset of T-cells.

The protein resides in the membrane. Functionally, receptor for CLEC2D/OCIL. Ligand-binding contributes to inhibition of cytotoxic natural killer (NK) cells. May mediate MHC class I-independent 'missing-self' recognition of allografts, tumor cells and virus-infected cells. This is Killer cell lectin-like receptor subfamily B member 1B allele A (Klrb1b) from Mus musculus (Mouse).